The chain runs to 118 residues: Large ribosomal subunit protein uL18 (118 aa).

It belongs to the universal ribosomal protein uL18 family. As to quaternary structure, part of the 50S ribosomal subunit; part of the 5S rRNA/L5/L18/L25 subcomplex. Contacts the 5S and 23S rRNAs.

Functionally, this is one of the proteins that bind and probably mediate the attachment of the 5S RNA into the large ribosomal subunit, where it forms part of the central protuberance. This Acidobacterium capsulatum (strain ATCC 51196 / DSM 11244 / BCRC 80197 / JCM 7670 / NBRC 15755 / NCIMB 13165 / 161) protein is Large ribosomal subunit protein uL18.